Reading from the N-terminus, the 336-residue chain is Aspartate--ammonia ligase (336 aa).

Belongs to the class-II aminoacyl-tRNA synthetase family. AsnA subfamily.

The protein localises to the cytoplasm. It catalyses the reaction L-aspartate + NH4(+) + ATP = L-asparagine + AMP + diphosphate + H(+). The protein operates within amino-acid biosynthesis; L-asparagine biosynthesis; L-asparagine from L-aspartate (ammonia route): step 1/1. This chain is Aspartate--ammonia ligase, found in Limosilactobacillus fermentum (strain NBRC 3956 / LMG 18251) (Lactobacillus fermentum).